The primary structure comprises 352 residues: C-C chemokine receptor type 5 (352 aa).

The Extracellular portion of the chain corresponds to 1–30 (MDYQVSSPTYDIDYYTSEPCQKINVKQIAA). At Tyr-3 the chain carries Sulfotyrosine. 2 O-linked (GalNAc...) serine glycosylation sites follow: Ser-6 and Ser-7. Sulfotyrosine is present on residues Tyr-10, Tyr-14, and Tyr-15. 2 cysteine pairs are disulfide-bonded: Cys-20-Cys-269 and Cys-101-Cys-178. Residues 31–58 (RLLPPLYSLVFIFGFVGNILVVLILINC) traverse the membrane as a helical segment. At 59–68 (KRLKSMTDIY) the chain is on the cytoplasmic side. Residues 69–89 (LLNLAISDLLFLLTVPFWAHY) form a helical membrane-spanning segment. At 90–102 (AAAQWDFGNTMCQ) the chain is on the extracellular side. A helical transmembrane segment spans residues 103 to 124 (LLTGLYFIGFFSGIFFIILLTI). The Cytoplasmic portion of the chain corresponds to 125 to 141 (DRYLAIVHAVFALKART). A helical transmembrane segment spans residues 142 to 166 (VTFGVVTSVITWVVAVFASLPRIIF). The Extracellular portion of the chain corresponds to 167 to 198 (TTSHRERLHYTCSSHFPYSQYQFWKNFHTLKI). Residues 199–218 (VILGLVLPLLVMVICYSGIL) form a helical membrane-spanning segment. Residues 219 to 235 (KTLLRCRNEKKRHRAVR) are Cytoplasmic-facing. A helical membrane pass occupies residues 236 to 260 (LIFTIMIVYFLFWAPYNIVLLLNTF). Over 261–277 (QEFFGLNNCSSSNRLDQ) the chain is Extracellular. The helical transmembrane segment at 278 to 301 (AMQVTETLGMTHCCINPIIYAFVG) threads the bilayer. Residues 302–352 (EKFRNYLLVFFQKHIAKRFCKCCSIFQQEAPERASSVYTRSTGEQEISVGL) lie on the Cytoplasmic side of the membrane. S-palmitoyl cysteine attachment occurs at residues Cys-321, Cys-323, and Cys-324. Residues Ser-336, Ser-337, Ser-342, and Ser-349 each carry the phosphoserine; by BARK1 modification.

Belongs to the G-protein coupled receptor 1 family. In terms of assembly, interacts with PRAF2. Efficient ligand binding to CCL3/MIP-1alpha and CCL4/MIP-1beta requires sulfation, O-glycosylation and sialic acid modifications. Glycosylation on Ser-6 is required for efficient binding of CCL4. Interacts with GRK2. Interacts with ARRB1 and ARRB2. Interacts with CNIH4. Interacts with S100A4; this interaction stimulates T-lymphocyte chemotaxis. Post-translationally, sulfated on at least 2 of the N-terminal tyrosines. Sulfation is required for efficient binding of the chemokines, CCL3 and CCL4. In terms of processing, palmitoylation in the C-terminal is important for cell surface expression. Phosphorylation on serine residues in the C-terminal is stimulated by binding CC chemokines especially by APO-RANTES. Post-translationally, O-glycosylated, but not N-glycosylated. Ser-6 appears to be the major site even if Ser-7 may be also O-glycosylated. Also sialylated glycans present which contribute to chemokine binding. Thr-16 and Ser-17 may also be glycosylated and, if so, with small moieties such as a T-antigen.

The protein resides in the cell membrane. Functionally, receptor for a number of inflammatory CC-chemokines including CCL3/MIP-1-alpha, CCL4/MIP-1-beta and RANTES and subsequently transduces a signal by increasing the intracellular calcium ion level. May play a role in the control of granulocytic lineage proliferation or differentiation. Participates in T-lymphocyte migration to the infection site by acting as a chemotactic receptor. The protein is C-C chemokine receptor type 5 (CCR5) of Cercopithecus ascanius (Black-cheeked white-nosed monkey).